A 284-amino-acid chain; its full sequence is Nucleotide-binding protein NMC0691 (284 aa).

An ATP-binding site is contributed by 8 to 15; it reads GLSGSGKS. Residue 58–61 participates in GTP binding; it reads DVRS.

Belongs to the RapZ-like family.

Functionally, displays ATPase and GTPase activities. In Neisseria meningitidis serogroup C / serotype 2a (strain ATCC 700532 / DSM 15464 / FAM18), this protein is Nucleotide-binding protein NMC0691.